Reading from the N-terminus, the 187-residue chain is Probable cobalt-precorrin-6B C(15)-methyltransferase (decarboxylating) (187 aa).

S-adenosyl-L-methionine contacts are provided by residues Thr15, 39–43 (GSCTG), Glu60, and Ala89.

This sequence belongs to the methyltransferase superfamily. Archaeal-type CbiT family.

The enzyme catalyses Co-precorrin-6B + S-adenosyl-L-methionine = Co-precorrin-7 + S-adenosyl-L-homocysteine + CO2. It participates in cofactor biosynthesis; adenosylcobalamin biosynthesis; cob(II)yrinate a,c-diamide from sirohydrochlorin (anaerobic route): step 8/10. Catalyzes the methylation of C-15 in cobalt-precorrin-6B followed by the decarboxylation of C-12 to form cobalt-precorrin-7. The polypeptide is Probable cobalt-precorrin-6B C(15)-methyltransferase (decarboxylating) (Halobacterium salinarum (strain ATCC 700922 / JCM 11081 / NRC-1) (Halobacterium halobium)).